Here is a 570-residue protein sequence, read N- to C-terminus: MSMFCYQCQEAAGGRGCTVKGVCGKTEDIAKTQDLIIYVVKGIAIYSSQAREMGLNTSEADKFIVESLFSTITNANFDAKALNARVQKGLKIRQSLKDAIIKAGGSYNSKENKSWTSKFLSVLGIKNDKDEKEIHDAAVWAANNPEDFKKKAETVGVLATENEDIRSLRELLTYGLKGMAAYLEHANNLGYDEDSIHAFMEKALVATLDDTLSADELTALVLECGKYGVDVMALLDKANTSTYGNPEITKVNIGVRNNPGILISGHDLKDMEELLKQTEGTGVDVYTHSEMLPANYYPAFKKYKHFVGNYGNAWWKQNEEFEAFNGPILMTTNCIVTPKASYKDRMYTTGVTGFEGVKHINTSKDGKKDFSEIIEHAKRCTSPKEIEKGEIIGGFAHNQVLALAPQVVDAVKTGAIKRFFVMAGCDGRMKSRNYYTDFAKALPKDTVILTAGCAKYKYNKLDLGDINGIPRVLDAGQCNDSYSLAVIALKLKEVFELEDINELPISYNIAWYEQKAVIVLLALLHLGVKNIHLGPTLPAFLSPNVAKILVENFGIGTISSVDEDIKMFMN.

Residues cysteine 5, cysteine 8, cysteine 17, and cysteine 23 each coordinate [4Fe-4S] cluster. Hybrid [4Fe-2O-2S] cluster-binding residues include histidine 266, glutamate 290, cysteine 334, cysteine 425, cysteine 453, cysteine 478, glutamate 513, and lysine 515. Position 425 is a cysteine persulfide (cysteine 425).

It belongs to the HCP family. Requires [4Fe-4S] cluster as cofactor. Hybrid [4Fe-2O-2S] cluster is required as a cofactor.

The protein resides in the cytoplasm. The catalysed reaction is A + NH4(+) + H2O = hydroxylamine + AH2 + H(+). In terms of biological role, catalyzes the reduction of hydroxylamine to form NH(3) and H(2)O. The polypeptide is Hydroxylamine reductase (Clostridium botulinum (strain Kyoto / Type A2)).